Consider the following 489-residue polypeptide: Glycogen synthase (489 aa).

An ADP-alpha-D-glucose-binding site is contributed by Arg20.

The protein belongs to the glycosyltransferase 1 family. Bacterial/plant glycogen synthase subfamily.

It carries out the reaction [(1-&gt;4)-alpha-D-glucosyl](n) + ADP-alpha-D-glucose = [(1-&gt;4)-alpha-D-glucosyl](n+1) + ADP + H(+). It functions in the pathway glycan biosynthesis; glycogen biosynthesis. Synthesizes alpha-1,4-glucan chains using ADP-glucose. This chain is Glycogen synthase, found in Chlorobium chlorochromatii (strain CaD3).